The primary structure comprises 291 residues: 33 kDa chaperonin (291 aa).

Intrachain disulfides connect cysteine 236–cysteine 238 and cysteine 269–cysteine 272.

This sequence belongs to the HSP33 family. Post-translationally, under oxidizing conditions two disulfide bonds are formed involving the reactive cysteines. Under reducing conditions zinc is bound to the reactive cysteines and the protein is inactive.

Its subcellular location is the cytoplasm. Its function is as follows. Redox regulated molecular chaperone. Protects both thermally unfolding and oxidatively damaged proteins from irreversible aggregation. Plays an important role in the bacterial defense system toward oxidative stress. This Lactobacillus johnsonii (strain CNCM I-12250 / La1 / NCC 533) protein is 33 kDa chaperonin.